Consider the following 567-residue polypeptide: Platelet glycoprotein V (567 aa).

Positions 1–16 (MLRSALLSAVLPLLRA) are cleaved as a signal peptide. In terms of domain architecture, LRRNT spans 17-50 (QPFPCPKTCKCVVRDAAQCSGGSVAHIAELGLPT). The Extracellular segment spans residues 17-522 (QPFPCPKTCK…ESPNNRLYWG (506 aa)). N-linked (GlcNAc...) asparagine glycans are attached at residues asparagine 51 and asparagine 67. LRR repeat units lie at residues 75–96 (VLQR…TFND), 99–120 (KLKT…ILDK), 123–144 (LLEQ…LFQQ), 147–168 (NLQE…LFSS), 171–193 (ELKL…LGAQ), 195–216 (KLEK…LLSN), 219–240 (ALTE…AFDR), 243–264 (NLSS…LFLH), 267–288 (SVSR…LFGE), 291–312 (GLRE…AFRN), 315–337 (GLQT…VFQG), 340–361 (ELRV…ALRG), 364–385 (HLRQ…LFRN), and 388–409 (SLES…VFAA). Asparagine 181 carries N-linked (GlcNAc...) asparagine glycosylation. The N-linked (GlcNAc...) asparagine glycan is linked to asparagine 243. N-linked (GlcNAc...) asparagine glycans are attached at residues asparagine 298 and asparagine 312. Residue asparagine 385 is glycosylated (N-linked (GlcNAc...) asparagine). In terms of domain architecture, LRRCT spans 421–474 (NPWLCDCGLWRFLQWLRHHPDILGRDEPPQCRGPEPRASLSFWELLQGDPWCPD). Residues 523 to 543 (LYILLLVAQAIIAAFIVFAMI) form a helical membrane-spanning segment. The Cytoplasmic segment spans residues 544-567 (KIGQLFRTLIREKLLLEAMGKSCN).

Its subcellular location is the membrane. Its function is as follows. The GPIb-V-IX complex functions as the vWF receptor and mediates vWF-dependent platelet adhesion to blood vessels. The adhesion of platelets to injured vascular surfaces in the arterial circulation is a critical initiating event in hemostasis. The chain is Platelet glycoprotein V (Gp5) from Mus musculus (Mouse).